Here is a 311-residue protein sequence, read N- to C-terminus: 4-hydroxy-3-methylbut-2-enyl diphosphate reductase (311 aa).

Residue cysteine 12 coordinates [4Fe-4S] cluster. (2E)-4-hydroxy-3-methylbut-2-enyl diphosphate contacts are provided by histidine 41 and histidine 74. Dimethylallyl diphosphate contacts are provided by histidine 41 and histidine 74. Isopentenyl diphosphate contacts are provided by histidine 41 and histidine 74. Residue cysteine 96 coordinates [4Fe-4S] cluster. Histidine 124 is a binding site for (2E)-4-hydroxy-3-methylbut-2-enyl diphosphate. Histidine 124 serves as a coordination point for dimethylallyl diphosphate. Residue histidine 124 participates in isopentenyl diphosphate binding. The Proton donor role is filled by glutamate 126. Threonine 168 serves as a coordination point for (2E)-4-hydroxy-3-methylbut-2-enyl diphosphate. Position 198 (cysteine 198) interacts with [4Fe-4S] cluster. Residues serine 226, serine 227, asparagine 228, and serine 270 each coordinate (2E)-4-hydroxy-3-methylbut-2-enyl diphosphate. Dimethylallyl diphosphate is bound by residues serine 226, serine 227, asparagine 228, and serine 270. Isopentenyl diphosphate is bound by residues serine 226, serine 227, asparagine 228, and serine 270.

This sequence belongs to the IspH family. It depends on [4Fe-4S] cluster as a cofactor.

The catalysed reaction is isopentenyl diphosphate + 2 oxidized [2Fe-2S]-[ferredoxin] + H2O = (2E)-4-hydroxy-3-methylbut-2-enyl diphosphate + 2 reduced [2Fe-2S]-[ferredoxin] + 2 H(+). It catalyses the reaction dimethylallyl diphosphate + 2 oxidized [2Fe-2S]-[ferredoxin] + H2O = (2E)-4-hydroxy-3-methylbut-2-enyl diphosphate + 2 reduced [2Fe-2S]-[ferredoxin] + 2 H(+). The protein operates within isoprenoid biosynthesis; dimethylallyl diphosphate biosynthesis; dimethylallyl diphosphate from (2E)-4-hydroxy-3-methylbutenyl diphosphate: step 1/1. It participates in isoprenoid biosynthesis; isopentenyl diphosphate biosynthesis via DXP pathway; isopentenyl diphosphate from 1-deoxy-D-xylulose 5-phosphate: step 6/6. In terms of biological role, catalyzes the conversion of 1-hydroxy-2-methyl-2-(E)-butenyl 4-diphosphate (HMBPP) into a mixture of isopentenyl diphosphate (IPP) and dimethylallyl diphosphate (DMAPP). Acts in the terminal step of the DOXP/MEP pathway for isoprenoid precursor biosynthesis. The polypeptide is 4-hydroxy-3-methylbut-2-enyl diphosphate reductase (Alcanivorax borkumensis (strain ATCC 700651 / DSM 11573 / NCIMB 13689 / SK2)).